A 213-amino-acid polypeptide reads, in one-letter code: Ferric nitrobindin-like protein (213 aa).

The segment at 17-42 (VNLAAEQSKSTSDKNLPEFGDMPIPD) is disordered. The short motif at 65–71 (GVWRGQG) is the GXWXGXG element.

The protein belongs to the nitrobindin family.

In Corynebacterium jeikeium (strain K411), this protein is Ferric nitrobindin-like protein.